Consider the following 298-residue polypeptide: ATP phosphoribosyltransferase (298 aa).

Belongs to the ATP phosphoribosyltransferase family. Long subfamily. The cofactor is Mg(2+).

The protein resides in the cytoplasm. The enzyme catalyses 1-(5-phospho-beta-D-ribosyl)-ATP + diphosphate = 5-phospho-alpha-D-ribose 1-diphosphate + ATP. Its pathway is amino-acid biosynthesis; L-histidine biosynthesis; L-histidine from 5-phospho-alpha-D-ribose 1-diphosphate: step 1/9. Feedback inhibited by histidine. Functionally, catalyzes the condensation of ATP and 5-phosphoribose 1-diphosphate to form N'-(5'-phosphoribosyl)-ATP (PR-ATP). Has a crucial role in the pathway because the rate of histidine biosynthesis seems to be controlled primarily by regulation of HisG enzymatic activity. This is ATP phosphoribosyltransferase from Tolumonas auensis (strain DSM 9187 / NBRC 110442 / TA 4).